We begin with the raw amino-acid sequence, 529 residues long: Variant surface glycoprotein MITAT 1.6 (529 aa).

The N-terminal stretch at 1 to 24 (MAVHRALAAYAISLYVLLPRKSGA) is a signal peptide. 2 cysteine pairs are disulfide-bonded: cysteine 39–cysteine 170 and cysteine 147–cysteine 214. Asparagine 456 carries an N-linked (GlcNAc...) (high mannose) asparagine glycan. The GPI-anchor amidated aspartate moiety is linked to residue aspartate 506. Residues 507–529 (SSILVTKKFALTVVSAAFVALLF) constitute a propeptide, removed in mature form.

In terms of processing, N-glycosylated; glycan is composed of 6 to 9 mannose residues.

It is found in the cell membrane. Its function is as follows. VSG forms a coat on the surface of the parasite. The trypanosome evades the immune response of the host by expressing a series of antigenically distinct VSGs from an estimated 1000 VSG genes. The protein is Variant surface glycoprotein MITAT 1.6 of Trypanosoma brucei brucei.